The sequence spans 223 residues: UPF0441 protein YgiB (223 aa).

Residues 201–223 (ESVAKQSAMQRSAAGTSTRSMGG) form a disordered region. The span at 204–223 (AKQSAMQRSAAGTSTRSMGG) shows a compositional bias: polar residues.

This sequence belongs to the UPF0441 family.

The sequence is that of UPF0441 protein YgiB from Salmonella arizonae (strain ATCC BAA-731 / CDC346-86 / RSK2980).